A 473-amino-acid polypeptide reads, in one-letter code: Uronate isomerase (473 aa).

It belongs to the metallo-dependent hydrolases superfamily. Uronate isomerase family.

The enzyme catalyses D-glucuronate = D-fructuronate. It carries out the reaction aldehydo-D-galacturonate = keto-D-tagaturonate. The protein operates within carbohydrate metabolism; pentose and glucuronate interconversion. The protein is Uronate isomerase (uxaC) of Bacillus subtilis (strain 168).